The following is a 230-amino-acid chain: Large ribosomal subunit protein uL1 (230 aa).

The protein belongs to the universal ribosomal protein uL1 family. Part of the 50S ribosomal subunit.

Binds directly to 23S rRNA. The L1 stalk is quite mobile in the ribosome, and is involved in E site tRNA release. Its function is as follows. Protein L1 is also a translational repressor protein, it controls the translation of the L11 operon by binding to its mRNA. The polypeptide is Large ribosomal subunit protein uL1 (Erythrobacter litoralis (strain HTCC2594)).